Here is a 451-residue protein sequence, read N- to C-terminus: UPF0210 protein Asuc_1169 (451 aa).

Belongs to the UPF0210 family. As to quaternary structure, homodimer.

This chain is UPF0210 protein Asuc_1169, found in Actinobacillus succinogenes (strain ATCC 55618 / DSM 22257 / CCUG 43843 / 130Z).